The primary structure comprises 594 residues: UvrABC system protein C (594 aa).

The GIY-YIG domain maps to 13–99; that stretch reads HSSGVYQYFD…IKQLKPKYNI (87 aa). A UVR domain is found at 205 to 240; it reads DKLIKELELKMERLSNNLRFEEALIYRDRIAKIQKI.

Belongs to the UvrC family. In terms of assembly, interacts with UvrB in an incision complex.

It is found in the cytoplasm. Functionally, the UvrABC repair system catalyzes the recognition and processing of DNA lesions. UvrC both incises the 5' and 3' sides of the lesion. The N-terminal half is responsible for the 3' incision and the C-terminal half is responsible for the 5' incision. This is UvrABC system protein C from Helicobacter pylori (strain HPAG1).